A 211-amino-acid polypeptide reads, in one-letter code: Protein-L-isoaspartate O-methyltransferase 2 (211 aa).

Residue Ser-61 is part of the active site.

It belongs to the methyltransferase superfamily. L-isoaspartyl/D-aspartyl protein methyltransferase family.

Its subcellular location is the cytoplasm. It carries out the reaction [protein]-L-isoaspartate + S-adenosyl-L-methionine = [protein]-L-isoaspartate alpha-methyl ester + S-adenosyl-L-homocysteine. Functionally, catalyzes the methyl esterification of L-isoaspartyl residues in peptides and proteins that result from spontaneous decomposition of normal L-aspartyl and L-asparaginyl residues. It plays a role in the repair and/or degradation of damaged proteins. In Polaromonas sp. (strain JS666 / ATCC BAA-500), this protein is Protein-L-isoaspartate O-methyltransferase 2.